The following is a 1070-amino-acid chain: 3',5'-cyclic-AMP phosphodiesterase (1070 aa).

4 disordered regions span residues 1–91 (MSQE…KQDS), 166–215 (STSI…TRFQ), 487–516 (VPASNKSRRPNQSSSASRSGNPPGAPLSQG), and 615–653 (SAGQYARSRSPRGPPMSQISGVKRPLSHTNSFTGERLPT). Residues 51-69 (KQVQVQSQKFSSTSSTTKV) are compositionally biased toward low complexity. Over residues 70–84 (ATHSFSMSSSAGTTG) the composition is skewed to polar residues. The segment covering 166-210 (STSIITSSEQRTSTSTSSSSSTRYIASGSSNLAGGNSNSASSASS) has biased composition (low complexity). A compositionally biased stretch (polar residues) spans 488 to 506 (PASNKSRRPNQSSSASRSG). Positions 656 to 985 (VETPRENELG…DYYQSMIPPS (330 aa)) constitute a PDEase domain. His732 serves as the catalytic Proton donor. 732–736 (HNSLH) contributes to the 3',5'-cyclic AMP binding site. Residues His736, His772, Asp773, and Asp890 each coordinate a divalent metal cation. 3',5'-cyclic AMP-binding residues include Asp773, Asp890, and Gln941. The segment covering 1007 to 1024 (EESDQENLAELEEGDESG) has biased composition (acidic residues). Positions 1007–1070 (EESDQENLAE…CQNQPQHGGM (64 aa)) are disordered. A compositionally biased stretch (low complexity) spans 1025-1042 (GESTTTGTTGTTAASALS). The span at 1043–1054 (GAGGGGGGGGGM) shows a compositional bias: gly residues. The segment covering 1060–1070 (GCQNQPQHGGM) has biased composition (polar residues).

This sequence belongs to the cyclic nucleotide phosphodiesterase family. PDE4 subfamily. Monomer. It depends on a divalent metal cation as a cofactor.

The enzyme catalyses 3',5'-cyclic AMP + H2O = AMP + H(+). The protein operates within purine metabolism; 3',5'-cyclic AMP degradation; AMP from 3',5'-cyclic AMP: step 1/1. Hydrolyzes the second messenger cAMP, which is a key regulator of many important physiological processes. Vital for female fertility. Required for learning/memory. The sequence is that of 3',5'-cyclic-AMP phosphodiesterase (dnc) from Drosophila melanogaster (Fruit fly).